A 161-amino-acid polypeptide reads, in one-letter code: Copper transporter 1 (161 aa).

The next 2 helical transmembrane spans lie at 55–75 and 109–129; these read GGMY…VEFL and VAYL…LVAV.

The protein belongs to the copper transporter (Ctr) (TC 1.A.56) family. SLC31A subfamily. In terms of assembly, self-interacts. Interacts with SWEET11 and COPT2.

Its subcellular location is the cell membrane. In terms of biological role, involved in the transport of copper, in cooperation with SWEET11 and COPT2. Contributes to the removal of copper (Cu) from xylem, and thus to the sensitivity toward bacterial pathogens such as X.oryzae pv. oryzae (Xoo). The chain is Copper transporter 1 (COPT1) from Oryza sativa subsp. japonica (Rice).